We begin with the raw amino-acid sequence, 646 residues long: Phosphomethylpyrimidine synthase (646 aa).

Polar residues predominate over residues 1–13; that stretch reads MNIRSNPDTTRPA. The segment at 1 to 21 is disordered; the sequence is MNIRSNPDTTRPAVTTGGLPS. Substrate contacts are provided by residues Asn221, Met250, Tyr279, His315, 335–337, 376–379, and Glu415; these read SRG and DGLR. His419 is a Zn(2+) binding site. Residue Tyr442 coordinates substrate. His483 lines the Zn(2+) pocket. 3 residues coordinate [4Fe-4S] cluster: Cys563, Cys566, and Cys571.

It belongs to the ThiC family. In terms of assembly, homodimer. [4Fe-4S] cluster serves as cofactor.

The enzyme catalyses 5-amino-1-(5-phospho-beta-D-ribosyl)imidazole + S-adenosyl-L-methionine = 4-amino-2-methyl-5-(phosphooxymethyl)pyrimidine + CO + 5'-deoxyadenosine + formate + L-methionine + 3 H(+). It participates in cofactor biosynthesis; thiamine diphosphate biosynthesis. Functionally, catalyzes the synthesis of the hydroxymethylpyrimidine phosphate (HMP-P) moiety of thiamine from aminoimidazole ribotide (AIR) in a radical S-adenosyl-L-methionine (SAM)-dependent reaction. The polypeptide is Phosphomethylpyrimidine synthase (Rhodopseudomonas palustris (strain HaA2)).